The following is a 256-amino-acid chain: Small ribosomal subunit protein eS1 (256 aa).

Residues 1–18 (MAVGKNKRLSKGKKGLKK) show a composition bias toward basic residues. Residues 1–20 (MAVGKNKRLSKGKKGLKKKA) form a disordered region. Ala-2 carries the post-translational modification N-acetylalanine; partial.

The protein belongs to the eukaryotic ribosomal protein eS1 family. As to quaternary structure, component of the small ribosomal subunit. Mature ribosomes consist of a small (40S) and a large (60S) subunit. The 40S subunit contains about 33 different proteins and 1 molecule of RNA (18S). The 60S subunit contains about 49 different proteins and 3 molecules of RNA (25S, 5.8S and 5S).

Its subcellular location is the cytoplasm. This chain is Small ribosomal subunit protein eS1, found in Podospora anserina (strain S / ATCC MYA-4624 / DSM 980 / FGSC 10383) (Pleurage anserina).